The chain runs to 506 residues: Bone morphogenetic protein 6 (506 aa).

The first 20 residues, Met-1–Ser-20, serve as a signal peptide directing secretion. Residues Cys-21–Arg-367 constitute a propeptide that is removed on maturation. Disordered regions lie at residues Ala-44–Leu-64, Pro-87–Ser-125, and Lys-139–Ser-195. A compositionally biased stretch (low complexity) spans Leu-96 to Gln-112. Residues Asp-140–Glu-153 are compositionally biased toward acidic residues. Residues Asn-234, Asn-262, Asn-379, Asn-397, and Asn-447 are each glycosylated (N-linked (GlcNAc...) asparagine). The segment at Thr-366 to Asn-397 is disordered. Over residues Asp-386–Asn-397 the composition is skewed to polar residues. Disulfide bonds link Cys-405–Cys-471, Cys-434–Cys-503, and Cys-438–Cys-505.

Belongs to the TGF-beta family. In terms of assembly, interacts with SOSTDC1. Interacts (when glycosylated) with type I receptor ACVR1; the interaction may induce HAMP expression. Interacts with type II receptor ACVR2B. Interacts with Hemojuvelin/HJV. Interacts with ERFE; the interaction inhibits BMP-induced transcription of HAMP. Interacts with BMPR1A/ALK3. Forms heterodimers with BMP2 in vitro; the heterodimer then binds to its receptor BMPR1A /ALK3 and may induce HAMP expression.

The protein resides in the secreted. Functionally, growth factor of the TGF-beta superfamily that plays essential roles in many developmental processes including cartilage and bone formation. Also plays an important role in the regulation of HAMP/hepcidin expression and iron metabolism by acting as a ligand for hemojuvelin/HJV. Also acts to promote expression of HAMP, potentially via the interaction with its receptor BMPR1A/ALK3. Initiates the canonical BMP signaling cascade by associating with type I receptor ACVR1 and type II receptor ACVR2B. In turn, ACVR1 propagates signal by phosphorylating SMAD1/5/8 that travel to the nucleus and act as activators and repressors of transcription of target. Can also signal through non-canonical pathway such as TAZ-Hippo signaling cascade to modulate VEGF signaling by regulating VEGFR2 expression. In Rattus norvegicus (Rat), this protein is Bone morphogenetic protein 6 (Bmp6).